Reading from the N-terminus, the 961-residue chain is Leucine--tRNA ligase (961 aa).

The 'HIGH' region motif lies at 41–51; that stretch reads PYLNGNLHAGH. Residues 632 to 636 carry the 'KMSKS' region motif; it reads KMSKS. An ATP-binding site is contributed by K635.

It belongs to the class-I aminoacyl-tRNA synthetase family.

Its subcellular location is the cytoplasm. The enzyme catalyses tRNA(Leu) + L-leucine + ATP = L-leucyl-tRNA(Leu) + AMP + diphosphate. The chain is Leucine--tRNA ligase from Methanosarcina acetivorans (strain ATCC 35395 / DSM 2834 / JCM 12185 / C2A).